Consider the following 383-residue polypeptide: Mannan endo-1,4-beta-mannosidase (383 aa).

The N-terminal stretch at 1–35 (MRNARSTLITTAGMAFAVLGLLFALAGPSAGRAEA) is a signal peptide. One can recognise a CBM10 domain in the interval 339–377 (GGSTGGTAPNGYPYCVNGGASDPDGDGWGWENSRSCVVR).

This sequence belongs to the glycosyl hydrolase 5 (cellulase A) family. Monomer.

It catalyses the reaction Random hydrolysis of (1-&gt;4)-beta-D-mannosidic linkages in mannans, galactomannans and glucomannans.. This Streptomyces lividans protein is Mannan endo-1,4-beta-mannosidase (manA).